A 902-amino-acid polypeptide reads, in one-letter code: MLIPSKLSRPVRLDHTVVRERLLAKLSGANNFRLALVTSPAGYGKTTLVSQWAAGKNELGWYSLDEGDNQQERFASYLIAAIQQATGGHCSTSEAMAQKRQYASLTSLFAQLFIELAQWHRPLYLVIDDYHLITNPVIHDAMRFFLRHQPENFTLVVLSRNLPQLGIANLRVRDQLLEIGSQQLAFNHQEAKQFFDRRLSSPIEAAESSRMCDDVAGWATALQLIALSARQNHTSAHHSARRLAGINASHLSDYLVDEVLDNVDVSTRHFLLKSAILRSMNDALIVRVTGEENGQMRLEEIERQGLFLQRMDDTGEWFSYHPLFGSFLRQRCQWELAAELPEIHRAAAESWMEQGFPSEAIHHALAAGDAQMLRDILLNHAWGLFNHSELALLEESLKALPWESLLENPRLVLLQAWLMQSQHRYSEVNTLLARAEQEIKGVMDGTLHAEFNALRAQVAINDGNPEEAERLAKLALDELPLAWFYSRIVATSVHGEVLHCKGDLSQSLSLMQQTEQMARHHDVWHYALWSLIQQSEIQFAQGFLQAAWETQERAFQLIKEQQHLEQLPMHEFLVRIRAQLLWAWARLDEAEASARSGIAVLSTFQPQQQLQCLTLLVQCSLARGDLDNARSQLNRLENLLGNGRYHCDWISNADKVRVIYWQLTGDKKSAANWLRHTPKPAFANNHFLQGQWRNIARAQILLGEFEPAEIVLEELNENARSLRLMSDLNRNLLLLNQLYWQSGRKNDAQRVLLDALQLANRTGFISHFVIEGEAMAQQLRQLIQLNTLPEMEQHRAQRILREINQHHRHKFAHFDEGFVERLLNHPDVPELIRTSPLTQREWQVLGLIYSGYSNEQIAGELAVAATTIKTHIRNLYQKLGVAHRQDAVQHAQQLLKMMGYGV.

39–46 (SPAGYGKT) is an ATP binding site. The HTH luxR-type domain maps to 830-895 (ELIRTSPLTQ…DAVQHAQQLL (66 aa)). Positions 854-873 (NEQIAGELAVAATTIKTHIR) form a DNA-binding region, H-T-H motif.

The protein belongs to the MalT family. As to quaternary structure, monomer in solution. Oligomerizes to an active state in the presence of the positive effectors ATP and maltotriose.

Its activity is regulated as follows. Activated by ATP and maltotriose, which are both required for DNA binding. Functionally, positively regulates the transcription of the maltose regulon whose gene products are responsible for uptake and catabolism of malto-oligosaccharides. Specifically binds to the promoter region of its target genes, recognizing a short DNA motif called the MalT box. The protein is HTH-type transcriptional regulator MalT of Salmonella dublin (strain CT_02021853).